Reading from the N-terminus, the 106-residue chain is Nucleoid-associated protein RPB_0667 (106 aa).

This sequence belongs to the YbaB/EbfC family. As to quaternary structure, homodimer.

The protein localises to the cytoplasm. It is found in the nucleoid. In terms of biological role, binds to DNA and alters its conformation. May be involved in regulation of gene expression, nucleoid organization and DNA protection. This is Nucleoid-associated protein RPB_0667 from Rhodopseudomonas palustris (strain HaA2).